Consider the following 187-residue polypeptide: Ubiquinone biosynthesis protein COQ4 homolog, mitochondrial (187 aa).

His77, Asp78, His81, and Glu93 together coordinate Zn(2+).

Belongs to the COQ4 family. In terms of assembly, component of a multi-subunit COQ enzyme complex. Zn(2+) serves as cofactor.

It is found in the mitochondrion inner membrane. It carries out the reaction a 4-hydroxy-3-methoxy-5-(all-trans-polyprenyl)benzoate + H(+) = a 2-methoxy-6-(all-trans-polyprenyl)phenol + CO2. The protein operates within cofactor biosynthesis; ubiquinone biosynthesis. Lyase that catalyzes the C1-decarboxylation of 4-hydroxy-3-methoxy-5-(all-trans-polyprenyl)benzoic acid into 2-methoxy-6-(all-trans-polyprenyl)phenol during ubiquinone biosynthesis. This chain is Ubiquinone biosynthesis protein COQ4 homolog, mitochondrial, found in Leishmania infantum.